The primary structure comprises 161 residues: Shikimate kinase (161 aa).

An ATP-binding site is contributed by 10–15 (GAGKTT). Thr-14 is a Mg(2+) binding site. Substrate is bound by residues Asp-28, Arg-52, and Gly-74. Arg-114 is an ATP binding site. Substrate is bound at residue Arg-132.

Belongs to the shikimate kinase family. As to quaternary structure, monomer. Mg(2+) serves as cofactor.

It is found in the cytoplasm. It catalyses the reaction shikimate + ATP = 3-phosphoshikimate + ADP + H(+). It functions in the pathway metabolic intermediate biosynthesis; chorismate biosynthesis; chorismate from D-erythrose 4-phosphate and phosphoenolpyruvate: step 5/7. Catalyzes the specific phosphorylation of the 3-hydroxyl group of shikimic acid using ATP as a cosubstrate. The chain is Shikimate kinase from Streptococcus gordonii (strain Challis / ATCC 35105 / BCRC 15272 / CH1 / DL1 / V288).